The following is a 541-amino-acid chain: Chaperonin GroEL (541 aa).

Residues 29–32 (TLGP), 86–90 (DGTTT), glycine 413, 476–478 (NAA), and aspartate 492 contribute to the ATP site. The interval 521 to 541 (KPEDNPAPAAPAANPGMGGMM) is disordered. The span at 526 to 535 (PAPAAPAANP) shows a compositional bias: low complexity.

Belongs to the chaperonin (HSP60) family. In terms of assembly, forms a cylinder of 14 subunits composed of two heptameric rings stacked back-to-back. Interacts with the co-chaperonin GroES.

The protein localises to the cytoplasm. It catalyses the reaction ATP + H2O + a folded polypeptide = ADP + phosphate + an unfolded polypeptide.. Functionally, together with its co-chaperonin GroES, plays an essential role in assisting protein folding. The GroEL-GroES system forms a nano-cage that allows encapsulation of the non-native substrate proteins and provides a physical environment optimized to promote and accelerate protein folding. The polypeptide is Chaperonin GroEL (Levilactobacillus brevis (strain ATCC 367 / BCRC 12310 / CIP 105137 / JCM 1170 / LMG 11437 / NCIMB 947 / NCTC 947) (Lactobacillus brevis)).